A 352-amino-acid polypeptide reads, in one-letter code: GTPase Obg (352 aa).

Residues 1–159 enclose the Obg domain; that stretch reads MHFLDQAKIY…MWVWLRLKLL (159 aa). The 168-residue stretch at 160–327 folds into the OBG-type G domain; sequence ADVGLLGLPN…LLDAVLGYLP (168 aa). GTP contacts are provided by residues 166–173, 191–195, 212–215, 279–282, and 308–310; these read GLPNAGKS, FTTLV, DIPG, NKLD, and SGA. The Mg(2+) site is built by S173 and T193. The disordered stretch occupies residues 329–352; that stretch reads STSTETKGSEVEEVDEEGGEWSPI. Positions 339 to 352 are enriched in acidic residues; the sequence is VEEVDEEGGEWSPI.

This sequence belongs to the TRAFAC class OBG-HflX-like GTPase superfamily. OBG GTPase family. In terms of assembly, monomer. The cofactor is Mg(2+).

The protein localises to the cytoplasm. An essential GTPase which binds GTP, GDP and possibly (p)ppGpp with moderate affinity, with high nucleotide exchange rates and a fairly low GTP hydrolysis rate. Plays a role in control of the cell cycle, stress response, ribosome biogenesis and in those bacteria that undergo differentiation, in morphogenesis control. The protein is GTPase Obg of Erythrobacter litoralis (strain HTCC2594).